The primary structure comprises 173 residues: Cytochrome c-type biogenesis protein CcmE (173 aa).

At methionine 1–arginine 8 the chain is on the cytoplasmic side. A helical; Signal-anchor for type II membrane protein transmembrane segment spans residues leucine 9 to alanine 29. The Periplasmic segment spans residues phenylalanine 30 to glycine 173. Residues histidine 127 and tyrosine 131 each coordinate heme. Positions lysine 145 to glycine 173 are disordered.

The protein belongs to the CcmE/CycJ family.

The protein resides in the cell inner membrane. Its function is as follows. Heme chaperone required for the biogenesis of c-type cytochromes. Transiently binds heme delivered by CcmC and transfers the heme to apo-cytochromes in a process facilitated by CcmF and CcmH. This Acidiphilium cryptum (strain JF-5) protein is Cytochrome c-type biogenesis protein CcmE.